Consider the following 187-residue polypeptide: Putative lipoprotein LppJ (187 aa).

An N-terminal signal peptide occupies residues 1–28; it reads MPHSTADRRLRLTRQALLAAAVAPLLAG. Cys29 is lipidated: N-palmitoyl cysteine. The S-diacylglycerol cysteine moiety is linked to residue Cys29.

Its subcellular location is the cell membrane. The sequence is that of Putative lipoprotein LppJ (lppJ) from Mycobacterium bovis (strain ATCC BAA-935 / AF2122/97).